Here is a 217-residue protein sequence, read N- to C-terminus: MGQKVCAHGFRVGPTLIKDWDSILYAEKHYKTLFIQDLKIRDLINKWFNQAQISRVLIERPSNKSIIININAKKPNIIIGKNGTEIDKLKKAIENMTFLKEVYINIHEVRKFNIDAAIVAQTIAAQLEKRVSFRKAMKTAIQASFKQGGQGIRVSCSGRLGGAEIARTEWYIEGRMPLHTLRADIDYSTAEAITTYGVIGVKVWIYKGEYKENKRYN.

In terms of domain architecture, KH type-2 spans I40–R110.

This sequence belongs to the universal ribosomal protein uS3 family. In terms of assembly, part of the 30S ribosomal subunit. Forms a tight complex with proteins S10 and S14.

Functionally, binds the lower part of the 30S subunit head. Binds mRNA in the 70S ribosome, positioning it for translation. This Rickettsia prowazekii (strain Madrid E) protein is Small ribosomal subunit protein uS3.